A 593-amino-acid polypeptide reads, in one-letter code: Mitoguardin 2 (593 aa).

2 helical membrane-spanning segments follow: residues 11-31 and 42-62; these read MIQALAMTVAEIPVFLYTTFG and PGLRKVLFATALGTVALALAA. Disordered stretches follow at residues 98–134, 150–171, and 197–229; these read PSVKKGCSSRRVQSPSSKSNDTLSGISSIEPSKHSGS, TAACSGSWEARGMEESVPTTDG, and VGQRGDGGSTPTPGDSLQNPDTASEALSEPESQ. Low complexity-rich tracts occupy residues 106-116 and 124-134; these read SRRVQSPSSKS and SSIEPSKHSGS. Ser-132 bears the Phosphoserine mark. Polar residues predominate over residues 205 to 218; sequence STPTPGDSLQNPDT. Thr-206 is modified (phosphothreonine). Residues Ser-220, Ser-224, and Ser-228 each carry the phosphoserine modification. Thr-273 is modified (phosphothreonine). Phosphoserine occurs at positions 276 and 295. The short motif at 292 to 298 is the FFAT element; the sequence is SFFSATE.

Belongs to the mitoguardin family. As to quaternary structure, homodimer and heterodimer; forms heterodimers with MIGA1. Interacts with PLD6/MitoPLD. Interacts (via phosphorylated FFAT motif) with MOSPD2. In terms of processing, phosphorylation at Ser-295 of the FFAT motif activates interaction with MOSPD2.

Its subcellular location is the mitochondrion outer membrane. Functionally, regulator of mitochondrial fusion. Acts by forming homo- and heterodimers at the mitochondrial outer membrane and facilitating the formation of PLD6/MitoPLD dimers. May act by regulating phospholipid metabolism via PLD6/MitoPLD. The chain is Mitoguardin 2 from Mus musculus (Mouse).